We begin with the raw amino-acid sequence, 364 residues long: Chorismate synthase (364 aa).

The disordered stretch occupies residues 41 to 60 (MQHDLDRRRPGTSRYTTARR). Positions 48 and 54 each coordinate NADP(+). FMN is bound by residues 125–127 (RSS), 238–239 (NA), Gly-278, 293–297 (KPTSS), and Arg-319.

Belongs to the chorismate synthase family. Homotetramer. It depends on FMNH2 as a cofactor.

The enzyme catalyses 5-O-(1-carboxyvinyl)-3-phosphoshikimate = chorismate + phosphate. It participates in metabolic intermediate biosynthesis; chorismate biosynthesis; chorismate from D-erythrose 4-phosphate and phosphoenolpyruvate: step 7/7. Functionally, catalyzes the anti-1,4-elimination of the C-3 phosphate and the C-6 proR hydrogen from 5-enolpyruvylshikimate-3-phosphate (EPSP) to yield chorismate, which is the branch point compound that serves as the starting substrate for the three terminal pathways of aromatic amino acid biosynthesis. This reaction introduces a second double bond into the aromatic ring system. The sequence is that of Chorismate synthase from Shewanella putrefaciens (strain CN-32 / ATCC BAA-453).